We begin with the raw amino-acid sequence, 2663 residues long: Ankyrin repeat domain-containing protein 11 (2663 aa).

2 disordered regions span residues 1-90 (MPKG…KEPV) and 128-169 (SANS…ERGE). Basic and acidic residues-rich tracts occupy residues 21 to 54 (MVEKQTGKKDKDKVSLTKTPKLERGDGGKEVRER) and 69 to 90 (EQKDSDTEKQGPERKRIKKEPV). The segment covering 128–155 (SANSPVDTTPKHPSQSTVCQKGTPNSAS) has biased composition (polar residues). Basic and acidic residues predominate over residues 156-169 (KTKDKVNKRNERGE). ANK repeat units lie at residues 167 to 196 (RGETRLHRAAIRGDARRIKELISEGADVNV), 200 to 229 (AGWTALHEACNRGYYDVAKQLLAAGAEVNT), 233 to 262 (DDDTPLHDAANNGHYKVVKLLLRYGGNPQQ), and 266 to 292 (KGETPLKVANSPTMVNLLLGKGTYTSS). S276 is modified (phosphoserine). Disordered stretches follow at residues 289 to 380 (YTSS…SNSF), 398 to 647 (APKK…GQCS), and 723 to 783 (DTNK…NDLK). Residues 295-305 (SSTESSEEEDA) show a composition bias toward acidic residues. Over residues 309–320 (APSSSVDGNNTD) the composition is skewed to polar residues. A compositionally biased stretch (basic and acidic residues) spans 356–376 (DRVPPVDDKHLLKKDYRKETK). The residue at position 408 (S408) is a Phosphoserine. At T410 the chain carries Phosphothreonine. S411 carries the phosphoserine modification. The span at 438–451 (KTREPSNAKQQKEK) shows a compositional bias: basic and acidic residues. The segment covering 452–462 (NKVKKKRKKET) has biased composition (basic residues). The span at 463–477 (KGREVRFGKRSDKFC) shows a compositional bias: basic and acidic residues. The segment covering 481–493 (SESESSESGEDDR) has biased composition (acidic residues). Residues 513–531 (SLFSSLSASSTSSHGSSAA) are compositionally biased toward low complexity. Residues 539-550 (TDQHTKHWRTDN) are compositionally biased toward basic and acidic residues. A compositionally biased stretch (polar residues) spans 551–562 (WKTISSPAWSEV). A compositionally biased stretch (low complexity) spans 576-588 (ESDYSSEGSSVES). Basic residues-rich tracts occupy residues 591–602 (PVRKRQEHRKRA) and 629–641 (VKKHKTKHKHKNK). S834 is modified (phosphoserine). 4 stretches are compositionally biased toward basic and acidic residues: residues 881 to 928 (VKED…EKHK), 935 to 1043 (SEKD…KSIL), 1059 to 1090 (KKDTKEKHKDTHGKDKERKASLDQGKEKKEKA), and 1099 to 1112 (FSEKKDDKKGKEKS). Disordered regions lie at residues 881 to 1043 (VKED…KSIL) and 1059 to 1393 (KKDT…GQYE). Residue S1079 is modified to Phosphoserine. At T1120 the chain carries Phosphothreonine. S1123 is modified (phosphoserine). Composition is skewed to basic and acidic residues over residues 1142 to 1301 (DLPR…DKIS), 1330 to 1347 (GDDKPRESACLPEKLKEK), and 1359 to 1393 (KSHDRERAKKEKAEKKEKGEDYKEGGSRKDSGQYE). T1419 bears the Phosphothreonine mark. 5 stretches are compositionally biased toward basic and acidic residues: residues 1424 to 1446 (STEKKDKNDSEREPSKKIEKELK), 1466 to 1545 (REKW…KGDP), 1556 to 1574 (APSKDPGKKDARPREKLLG), 1587 to 1597 (LSQKDLEIEER), and 1605 to 1639 (MKQMEKLRHRSGDPKLKEKAKPADDGRKKGLDIPA). The tract at residues 1424–1710 (STEKKDKNDS…TGVPTPTSVL (287 aa)) is disordered. Phosphoserine is present on S1509. The residue at position 1692 (S1692) is a Phosphoserine. Over residues 1698-1710 (SRPTGVPTPTSVL) the composition is skewed to polar residues. S1792 is subject to Phosphoserine. Residues 1814–1836 (SVPAASSYDSPMPPSMEDRAPLP) form a disordered region. S1847 carries the phosphoserine modification. Phosphotyrosine occurs at positions 1850 and 1851. Phosphoserine is present on residues S1852, S1859, and S1990. Disordered regions lie at residues 1988 to 2019 (PESPKRFCPADPLHSAAPGPFSASEAPYPAPP) and 2131 to 2406 (LDLG…STQQ). 2 stretches are compositionally biased toward low complexity: residues 2310 to 2324 (IQPEAAEPKPTAEAP) and 2391 to 2406 (RSTQQLQQQLNTSTQQ). The important for protein degradation stretch occupies residues 2369–2663 (AKARGSEDDD…VNDDFVLLPA (295 aa)).

Interacts with the PAS region of the p160 coactivators. Subject to proteasomal degradation which is probably essential to regulate its activity.

Its subcellular location is the nucleus. In terms of biological role, chromatin regulator which modulates histone acetylation and gene expression in neural precursor cells. May recruit histone deacetylases (HDACs) to the p160 coactivators/nuclear receptor complex to inhibit ligand-dependent transactivation. Has a role in proliferation and development of cortical neural precursors. May also regulate bone homeostasis. The sequence is that of Ankyrin repeat domain-containing protein 11 (ANKRD11) from Homo sapiens (Human).